Reading from the N-terminus, the 250-residue chain is Phosphonates import ATP-binding protein PhnC (250 aa).

Residues 2-247 enclose the ABC transporter domain; the sequence is ILFNNVNKVW…KLDAQAMKKI (246 aa). ATP is bound at residue 35–42; that stretch reads GLSGAGKT.

The protein belongs to the ABC transporter superfamily. Phosphonates importer (TC 3.A.1.9.1) family. The complex is composed of two ATP-binding proteins (PhnC), two transmembrane proteins (PhnE) and a solute-binding protein (PhnD).

It is found in the cell membrane. The catalysed reaction is phosphonate(out) + ATP + H2O = phosphonate(in) + ADP + phosphate + H(+). Part of the ABC transporter complex PhnCDE involved in phosphonates import. Responsible for energy coupling to the transport system. The protein is Phosphonates import ATP-binding protein PhnC of Mycoplasma capricolum subsp. capricolum (strain California kid / ATCC 27343 / NCTC 10154).